The chain runs to 479 residues: Aspartyl/glutamyl-tRNA(Asn/Gln) amidotransferase subunit B (479 aa).

It belongs to the GatB/GatE family. GatB subfamily. Heterotrimer of A, B and C subunits.

The enzyme catalyses L-glutamyl-tRNA(Gln) + L-glutamine + ATP + H2O = L-glutaminyl-tRNA(Gln) + L-glutamate + ADP + phosphate + H(+). It carries out the reaction L-aspartyl-tRNA(Asn) + L-glutamine + ATP + H2O = L-asparaginyl-tRNA(Asn) + L-glutamate + ADP + phosphate + 2 H(+). In terms of biological role, allows the formation of correctly charged Asn-tRNA(Asn) or Gln-tRNA(Gln) through the transamidation of misacylated Asp-tRNA(Asn) or Glu-tRNA(Gln) in organisms which lack either or both of asparaginyl-tRNA or glutaminyl-tRNA synthetases. The reaction takes place in the presence of glutamine and ATP through an activated phospho-Asp-tRNA(Asn) or phospho-Glu-tRNA(Gln). The sequence is that of Aspartyl/glutamyl-tRNA(Asn/Gln) amidotransferase subunit B from Streptococcus pyogenes serotype M49 (strain NZ131).